Here is a 235-residue protein sequence, read N- to C-terminus: MHIMEGYLPAIWCIVWFVVSIPVVAYGVYKLNKLVKEERGILPVLAVAGAFIFVLSSLKMPSVTGSCSHPTGTGIGAIIFGPAITAVLSTIVLIYQALFLAHGGLTTLGANVFSMGIVGPIVAYLIYKTGMKAKLNFYLIVFLAATLGDWATYIVTSTELALAFPAGDILTFGGFFSSFSKFVAIFAITQVPLAIVEGAVSALLFKYIIQAKSDLLVEMKVIGEPLVRKLRGLPA.

Transmembrane regions (helical) follow at residues 8-28, 40-60, 74-94, 107-127, 135-155, 160-180, and 185-205; these read LPAIWCIVWFVVSIPVVAYGV, GILPVLAVAGAFIFVLSSLKM, GIGAIIFGPAITAVLSTIVLI, TLGANVFSMGIVGPIVAYLIY, LNFYLIVFLAATLGDWATYIV, LALAFPAGDILTFGGFFSSFS, and IFAITQVPLAIVEGAVSALLF.

It belongs to the CbiM family. As to quaternary structure, forms an energy-coupling factor (ECF) transporter complex composed of an ATP-binding protein (A component, CbiO), a transmembrane protein (T component, CbiQ) and 2 possible substrate-capture proteins (S components, CbiM and CbiN) of unknown stoichimetry.

The protein localises to the cell membrane. Its pathway is cofactor biosynthesis; adenosylcobalamin biosynthesis. In terms of biological role, part of the energy-coupling factor (ECF) transporter complex CbiMNOQ involved in cobalt import. The protein is Putative cobalt transport protein CbiM 2 of Methanosarcina barkeri (strain Fusaro / DSM 804).